Consider the following 328-residue polypeptide: Cytochrome c biogenesis protein CcsA (328 aa).

The next 8 helical transmembrane spans lie at 13-33, 46-66, 73-93, 101-121, 146-166, 234-254, 263-283, and 295-315; these read ISFSVISIVLTIYFLTLLVNL, GIVITFFGITGLLFTRWIYSG, LYESLIFLSWAFSIIHMVSYF, LNAITAPSAIFIQGFATSGLL, MILGYGALLCGSLLSMALLVI, IISLGFIFLTVGILSGAVWAN, WDPKETWAFITWTIFAIYLHI, and AIVASIGFILIWICYFGVNLL.

Belongs to the CcmF/CycK/Ccl1/NrfE/CcsA family. As to quaternary structure, may interact with Ccs1.

The protein localises to the plastid. The protein resides in the chloroplast thylakoid membrane. Its function is as follows. Required during biogenesis of c-type cytochromes (cytochrome c6 and cytochrome f) at the step of heme attachment. The protein is Cytochrome c biogenesis protein CcsA of Nasturtium officinale (Watercress).